The sequence spans 172 residues: Adenine phosphoribosyltransferase (172 aa).

Belongs to the purine/pyrimidine phosphoribosyltransferase family. Homodimer.

Its subcellular location is the cytoplasm. The enzyme catalyses AMP + diphosphate = 5-phospho-alpha-D-ribose 1-diphosphate + adenine. Its pathway is purine metabolism; AMP biosynthesis via salvage pathway; AMP from adenine: step 1/1. Catalyzes a salvage reaction resulting in the formation of AMP, that is energically less costly than de novo synthesis. In Staphylococcus aureus (strain bovine RF122 / ET3-1), this protein is Adenine phosphoribosyltransferase.